The following is a 171-amino-acid chain: Ribosome maturation factor RimM (171 aa).

A PRC barrel domain is found at 94–168 (NDEFYKDELI…MTIVPPEIVG (75 aa)).

It belongs to the RimM family. Binds ribosomal protein uS19.

The protein resides in the cytoplasm. In terms of biological role, an accessory protein needed during the final step in the assembly of 30S ribosomal subunit, possibly for assembly of the head region. Essential for efficient processing of 16S rRNA. May be needed both before and after RbfA during the maturation of 16S rRNA. It has affinity for free ribosomal 30S subunits but not for 70S ribosomes. In Anaplasma phagocytophilum (strain HZ), this protein is Ribosome maturation factor RimM.